The chain runs to 1149 residues: Eukaryotic translation initiation factor 3 subunit A (1149 aa).

Positions 317–498 (IQRMTSHVLI…HSVHFGTDLS (182 aa)) constitute a PCI domain. Disordered stretches follow at residues 496 to 515 (DLSE…QSMP) and 811 to 1149 (EEER…KHHR). The span at 811 to 885 (EEERRRIEEE…APRGEKEERG (75 aa)) shows a compositional bias: basic and acidic residues. A compositionally biased stretch (gly residues) spans 886-895 (GGGGGGGAWR). Positions 908-924 (AKPESDWRNAREAREPA) are enriched in basic and acidic residues. The segment covering 925 to 937 (PESAGASSAAAPA) has biased composition (low complexity). Composition is skewed to basic and acidic residues over residues 961–970 (RPPRGDDREP), 1005–1095 (GPMR…DRRG), and 1113–1132 (EPAK…KEAR).

It belongs to the eIF-3 subunit A family. As to quaternary structure, component of the eukaryotic translation initiation factor 3 (eIF-3) complex.

It is found in the cytoplasm. Functionally, RNA-binding component of the eukaryotic translation initiation factor 3 (eIF-3) complex, which is involved in protein synthesis of a specialized repertoire of mRNAs and, together with other initiation factors, stimulates binding of mRNA and methionyl-tRNAi to the 40S ribosome. The eIF-3 complex specifically targets and initiates translation of a subset of mRNAs involved in cell proliferation. The sequence is that of Eukaryotic translation initiation factor 3 subunit A from Culex quinquefasciatus (Southern house mosquito).